A 241-amino-acid chain; its full sequence is Probable transcriptional regulatory protein Mpe_A1337 (241 aa).

The disordered stretch occupies residues 1 to 20 (MAGHSKWANIQHRKGRQDEK).

Belongs to the TACO1 family.

The protein localises to the cytoplasm. The polypeptide is Probable transcriptional regulatory protein Mpe_A1337 (Methylibium petroleiphilum (strain ATCC BAA-1232 / LMG 22953 / PM1)).